The following is a 274-amino-acid chain: tRNA-cytidine(32) 2-sulfurtransferase (274 aa).

A PP-loop motif motif is present at residues 40 to 45 (SGGKDS). Residues Cys-115, Cys-118, and Cys-206 each contribute to the [4Fe-4S] cluster site.

It belongs to the TtcA family. As to quaternary structure, homodimer. Mg(2+) serves as cofactor. [4Fe-4S] cluster is required as a cofactor.

Its subcellular location is the cytoplasm. The enzyme catalyses cytidine(32) in tRNA + S-sulfanyl-L-cysteinyl-[cysteine desulfurase] + AH2 + ATP = 2-thiocytidine(32) in tRNA + L-cysteinyl-[cysteine desulfurase] + A + AMP + diphosphate + H(+). Its pathway is tRNA modification. In terms of biological role, catalyzes the ATP-dependent 2-thiolation of cytidine in position 32 of tRNA, to form 2-thiocytidine (s(2)C32). The sulfur atoms are provided by the cysteine/cysteine desulfurase (IscS) system. In Pseudomonas fluorescens (strain SBW25), this protein is tRNA-cytidine(32) 2-sulfurtransferase.